The sequence spans 264 residues: 3-methyl-2-oxobutanoate hydroxymethyltransferase (264 aa).

The Mg(2+) site is built by aspartate 45 and aspartate 84. Residues 45 to 46 (DS), aspartate 84, and lysine 112 contribute to the 3-methyl-2-oxobutanoate site. Glutamate 114 provides a ligand contact to Mg(2+). Glutamate 181 (proton acceptor) is an active-site residue.

Belongs to the PanB family. Homodecamer; pentamer of dimers. The cofactor is Mg(2+).

It is found in the cytoplasm. It carries out the reaction 3-methyl-2-oxobutanoate + (6R)-5,10-methylene-5,6,7,8-tetrahydrofolate + H2O = 2-dehydropantoate + (6S)-5,6,7,8-tetrahydrofolate. It participates in cofactor biosynthesis; (R)-pantothenate biosynthesis; (R)-pantoate from 3-methyl-2-oxobutanoate: step 1/2. Functionally, catalyzes the reversible reaction in which hydroxymethyl group from 5,10-methylenetetrahydrofolate is transferred onto alpha-ketoisovalerate to form ketopantoate. The protein is 3-methyl-2-oxobutanoate hydroxymethyltransferase of Vibrio atlanticus (strain LGP32) (Vibrio splendidus (strain Mel32)).